Reading from the N-terminus, the 178-residue chain is ATP synthase subunit delta (178 aa).

Belongs to the ATPase delta chain family. As to quaternary structure, F-type ATPases have 2 components, F(1) - the catalytic core - and F(0) - the membrane proton channel. F(1) has five subunits: alpha(3), beta(3), gamma(1), delta(1), epsilon(1). F(0) has three main subunits: a(1), b(2) and c(10-14). The alpha and beta chains form an alternating ring which encloses part of the gamma chain. F(1) is attached to F(0) by a central stalk formed by the gamma and epsilon chains, while a peripheral stalk is formed by the delta and b chains.

It is found in the cell membrane. In terms of biological role, f(1)F(0) ATP synthase produces ATP from ADP in the presence of a proton or sodium gradient. F-type ATPases consist of two structural domains, F(1) containing the extramembraneous catalytic core and F(0) containing the membrane proton channel, linked together by a central stalk and a peripheral stalk. During catalysis, ATP synthesis in the catalytic domain of F(1) is coupled via a rotary mechanism of the central stalk subunits to proton translocation. This protein is part of the stalk that links CF(0) to CF(1). It either transmits conformational changes from CF(0) to CF(1) or is implicated in proton conduction. The protein is ATP synthase subunit delta of Geobacillus stearothermophilus (Bacillus stearothermophilus).